Consider the following 248-residue polypeptide: Granzyme-like protein 1 (248 aa).

Positions 1–18 (MNLLLLLLTVSLAPTTEA) are cleaved as a signal peptide. Positions 19 to 20 (AE) are cleaved as a propeptide — activation peptide. The Peptidase S1 domain maps to 21–246 (IIGGHEADPH…FLSWIEETMK (226 aa)). A disulfide bridge links cysteine 50 with cysteine 66. The Charge relay system role is filled by histidine 65. N-linked (GlcNAc...) asparagine glycosylation occurs at asparagine 72. The active-site Charge relay system is the aspartate 109. 2 cysteine pairs are disulfide-bonded: cysteine 143–cysteine 210 and cysteine 174–cysteine 189. Residue serine 204 is the Charge relay system of the active site.

Belongs to the peptidase S1 family. Granzyme subfamily. Duodenum.

In terms of biological role, this enzyme is necessary for target cell lysis in cell-mediated immune responses. This Rattus norvegicus (Rat) protein is Granzyme-like protein 1.